A 180-amino-acid chain; its full sequence is Endoribonuclease YbeY (180 aa).

Zn(2+)-binding residues include His-149, His-153, and His-159.

Belongs to the endoribonuclease YbeY family. Requires Zn(2+) as cofactor.

The protein resides in the cytoplasm. In terms of biological role, single strand-specific metallo-endoribonuclease involved in late-stage 70S ribosome quality control and in maturation of the 3' terminus of the 16S rRNA. The polypeptide is Endoribonuclease YbeY (Prochlorococcus marinus (strain MIT 9515)).